A 593-amino-acid chain; its full sequence is Tyrosine-protein phosphatase non-receptor type 9 (593 aa).

Met1 carries the N-acetylmethionine modification. The disordered stretch occupies residues 1 to 20 (MEPATAPRPDMAPELTPEEE). The CRAL-TRIO domain maps to 84-243 (EEPLRSEILS…NLGGYVKIDL (160 aa)). The 272-residue stretch at 303 to 574 (IYEEYEDIRR…YFCYKAILEF (272 aa)) folds into the Tyrosine-protein phosphatase domain. Catalysis depends on Cys515, which acts as the Phosphocysteine intermediate.

It belongs to the protein-tyrosine phosphatase family. Non-receptor class 3 subfamily.

The protein resides in the cytoplasm. The enzyme catalyses O-phospho-L-tyrosyl-[protein] + H2O = L-tyrosyl-[protein] + phosphate. Its function is as follows. Protein-tyrosine phosphatase that could participate in the transfer of hydrophobic ligands or in functions of the Golgi apparatus. This Mus musculus (Mouse) protein is Tyrosine-protein phosphatase non-receptor type 9 (Ptpn9).